Here is a 178-residue protein sequence, read N- to C-terminus: Large ribosomal subunit protein uL6 (178 aa).

The protein belongs to the universal ribosomal protein uL6 family. Part of the 50S ribosomal subunit.

This protein binds to the 23S rRNA, and is important in its secondary structure. It is located near the subunit interface in the base of the L7/L12 stalk, and near the tRNA binding site of the peptidyltransferase center. The polypeptide is Large ribosomal subunit protein uL6 (Shouchella clausii (strain KSM-K16) (Alkalihalobacillus clausii)).